The primary structure comprises 266 residues: Histidinol-phosphatase (266 aa).

Residues Glu-69, Asp-84, Ile-86, and Asp-87 each contribute to the Mg(2+) site. Residue Glu-69 coordinates substrate. Substrate is bound by residues 86–89 (IDGT), Arg-190, and Asp-218. Asp-218 lines the Mg(2+) pocket.

It belongs to the inositol monophosphatase superfamily. Requires Mg(2+) as cofactor.

It catalyses the reaction L-histidinol phosphate + H2O = L-histidinol + phosphate. It functions in the pathway amino-acid biosynthesis; L-histidine biosynthesis; L-histidine from 5-phospho-alpha-D-ribose 1-diphosphate: step 8/9. Functionally, catalyzes the dephosphorylation of histidinol-phosphate to histidinol, the direct precursor of histidine. This Streptomyces coelicolor (strain ATCC BAA-471 / A3(2) / M145) protein is Histidinol-phosphatase.